The sequence spans 246 residues: NAD-dependent protein deacetylase (246 aa).

The Deacetylase sirtuin-type domain maps to 1 to 246; that stretch reads MKKPDIQQLK…VIEEIVNSNS (246 aa). Residues alanine 25, phenylalanine 36, arginine 37, glutamine 106, isoleucine 108, aspartate 109, and histidine 124 each coordinate NAD(+). A nicotinamide-binding site is contributed by phenylalanine 36. Nicotinamide-binding residues include isoleucine 108 and aspartate 109. The active-site Proton acceptor is histidine 124. Residues cysteine 132, cysteine 135, cysteine 152, and cysteine 155 each contribute to the Zn(2+) site. Residues serine 193, serine 194, asparagine 216, and aspartate 233 each coordinate NAD(+).

Belongs to the sirtuin family. Class U subfamily. Zn(2+) serves as cofactor.

It localises to the cytoplasm. It carries out the reaction N(6)-acetyl-L-lysyl-[protein] + NAD(+) + H2O = 2''-O-acetyl-ADP-D-ribose + nicotinamide + L-lysyl-[protein]. In terms of biological role, NAD-dependent protein deacetylase which modulates the activities of several enzymes which are inactive in their acetylated form. The polypeptide is NAD-dependent protein deacetylase (Staphylococcus epidermidis (strain ATCC 12228 / FDA PCI 1200)).